Consider the following 517-residue polypeptide: Serine O-succinyltransferase (517 aa).

The transit peptide at Met-1 to Arg-46 directs the protein to the mitochondrion. The segment covering Ser-36–Ala-64 has biased composition (polar residues). A disordered region spans residues Ser-36–Ser-66. One can recognise an AB hydrolase-1 domain in the interval Asn-134 to Gln-386. Residues Gly-141 to Ala-144 are important for substrate specificity. The active-site Nucleophile is Ser-238. A substrate-binding site is contributed by Arg-307. The segment at Gln-413–Ser-436 is disordered. Residues Gln-416–Ser-436 are compositionally biased toward low complexity. Residues Asp-461 and His-498 contribute to the active site. A substrate-binding site is contributed by Asp-499.

Belongs to the AB hydrolase superfamily. MetX family.

The protein localises to the mitochondrion. It catalyses the reaction succinyl-CoA + L-serine = O-succinyl-L-serine + CoA. It functions in the pathway amino-acid biosynthesis; L-cysteine biosynthesis; L-cysteine from L-serine: step 1/2. Transfers a succinyl group from succinyl-CoA to L-serine, forming succinyl-L-serine. Also has weak serine acetyl transferase activity and homoserine succinyl transferase activity. In Emericella nidulans (strain FGSC A4 / ATCC 38163 / CBS 112.46 / NRRL 194 / M139) (Aspergillus nidulans), this protein is Serine O-succinyltransferase.